Consider the following 727-residue polypeptide: ADP-ribosylation factor-binding protein GGA3 (727 aa).

Residues 16–146 (ATNPSNRQED…MLKRQGIVQS (131 aa)) enclose the VHS domain. A phosphoserine mark is found at serine 159 and serine 275. Positions 171–298 (DEEKSKLLAK…VINSYKTIIE (128 aa)) constitute a GAT domain. The interval 299–597 (GQIINGEVTT…VHVPLESIKP (299 aa)) is unstructured hinge. Residues 334–385 (TPSSSSPVLAPAPAPPTSGIPILPPPPQTSGPPRSRSSSQAEAPSGPDSTNN) form a disordered region. The segment covering 343–363 (APAPAPPTSGIPILPPPPQTS) has biased composition (pro residues). Residues 364-374 (GPPRSRSSSQA) show a composition bias toward low complexity. A DXXLL motif is present at residues 391-395 (DEELL). The interval 400 to 419 (SDPAPTAPKESAGNSPWHLF) is disordered. Residues 598–719 (SSALPVTAYD…TELGEVDQFP (122 aa)) enclose the GAE domain.

The protein belongs to the GGA protein family. In terms of assembly, monomer. Interacts with GGA1 and GGA2. Binds to clathrin and activated ARFs, such as ARF1, ARF5 and ARF6. Binds RABEP1 and RABGEF1. Interacts with the membrane proteins M6PR/CD-MPR and IGF2R/CI-MPR and the accessory proteins SYNRG, EPN4, NECAP1, NECAP2 and AFTPH/aftiphilin. Interacts with TSG101 and UBC. Interacts with ADRA2B. Interacts with NTRK1; the interaction is independent of NTRK1 activation and ubiquitination. Interacts (via VHS domain) with BACE1 (via DXXLL motif). In terms of processing, phosphorylated by CK2 and dephosphorylated by PP2A. Phosphorylation of GGA3 allows the internal DXXLL motif to bind the VHS domain and to inhibit the recognition of cargo signals. Post-translationally, ubiquitinated. Proteolytically cleaved during apoptosis by CASP3.

It localises to the golgi apparatus. It is found in the trans-Golgi network membrane. Its subcellular location is the endosome membrane. The protein localises to the early endosome membrane. The protein resides in the recycling endosome membrane. Plays a role in protein sorting and trafficking between the trans-Golgi network (TGN) and endosomes. Mediates the ARF-dependent recruitment of clathrin to the TGN and binds ubiquitinated proteins and membrane cargo molecules with a cytosolic acidic cluster-dileucine (DXXLL) motif. Mediates export of the GPCR receptor ADRA2B to the cell surface. Involved in BACE1 transport and sorting as well as regulation of BACE1 protein levels. Regulates retrograde transport of BACE1 from endosomes to the trans-Golgi network via interaction through the VHS motif and dependent of BACE1 phosphorylation. Modulates BACE1 protein levels independently of the interaction between VHS domain and DXXLL motif through recognition of ubiquitination. Key player in a novel DXXLL-mediated endosomal sorting machinery to the recycling pathway that targets NTRK1 to the plasma membrane. The sequence is that of ADP-ribosylation factor-binding protein GGA3 from Rattus norvegicus (Rat).